Here is a 346-residue protein sequence, read N- to C-terminus: MVNIGVVGATGQGRQVMRNLLEQRNFPATSVRFFASPRSEGKKLTFRGQEIEVENAETADPSGLDIALFSAGATMSRVQAPRFAEAGVIVVDNSSAFRKDPDVPLVVSEVNFDRDVRGKKLAKGIIANPNCTTMAAMPVLKPLHEEAGLQRLIVSSYQAVSGSGIAGVEELAGQARPVIDGVEQLVHDGSALQYPAPNKYVAPIAFNIVPLAGNYVDDGSGETDEDQKLRNESRKILGIPELLVSGTCVRVPVFSGHSLSINAEFSQPISVERTKELLSAAAGVKLVDVPTPLAAAGIDDCLVGRIRQDPGVPDGRGLALFVSGDNLRKGAALNTIQIAELLAADL.

Residues 10–13 (TGQG) and 38–39 (RS) contribute to the NADP(+) site. Residue R98 coordinates phosphate. C131 functions as the Acyl-thioester intermediate in the catalytic mechanism. Q158 serves as a coordination point for substrate. 161–162 (SG) lines the NADP(+) pocket. Residue K228 coordinates phosphate. R250 lines the substrate pocket. Residue H257 is the Proton acceptor of the active site. Residue N326 participates in NADP(+) binding.

It belongs to the aspartate-semialdehyde dehydrogenase family. In terms of assembly, homodimer.

The catalysed reaction is L-aspartate 4-semialdehyde + phosphate + NADP(+) = 4-phospho-L-aspartate + NADPH + H(+). The protein operates within amino-acid biosynthesis; L-lysine biosynthesis via DAP pathway; (S)-tetrahydrodipicolinate from L-aspartate: step 2/4. Its pathway is amino-acid biosynthesis; L-methionine biosynthesis via de novo pathway; L-homoserine from L-aspartate: step 2/3. It functions in the pathway amino-acid biosynthesis; L-threonine biosynthesis; L-threonine from L-aspartate: step 2/5. Its function is as follows. Catalyzes the NADPH-dependent formation of L-aspartate-semialdehyde (L-ASA) by the reductive dephosphorylation of L-aspartyl-4-phosphate. The protein is Aspartate-semialdehyde dehydrogenase of Mycolicibacterium smegmatis (Mycobacterium smegmatis).